The following is a 308-amino-acid chain: Homoserine O-succinyltransferase (308 aa).

The Acyl-thioester intermediate role is filled by Cys-142. The substrate site is built by Lys-163 and Ser-192. His-235 functions as the Proton acceptor in the catalytic mechanism. Residue Glu-237 is part of the active site. Arg-249 contacts substrate.

It belongs to the MetA family.

The protein resides in the cytoplasm. It catalyses the reaction L-homoserine + succinyl-CoA = O-succinyl-L-homoserine + CoA. The protein operates within amino-acid biosynthesis; L-methionine biosynthesis via de novo pathway; O-succinyl-L-homoserine from L-homoserine: step 1/1. In terms of biological role, transfers a succinyl group from succinyl-CoA to L-homoserine, forming succinyl-L-homoserine. The chain is Homoserine O-succinyltransferase from Pseudoalteromonas atlantica (strain T6c / ATCC BAA-1087).